Reading from the N-terminus, the 274-residue chain is HTH-type transcriptional regulator GadX (274 aa).

The HTH araC/xylS-type domain maps to 145 to 242 (TRVCTVINNN…GMTPTEYQER (98 aa)). DNA-binding regions (H-T-H motif) lie at residues 162 to 183 (ARIASELLMSPSLLKKKLREEG) and 209 to 232 (IKRVAVSCGYHSVSYFIYVFRNYY).

In terms of assembly, homodimer.

Functionally, positively regulates the expression of about fifteen genes involved in acid resistance such as gadA, gadB and gadC. Depending on the conditions (growth phase and medium), can repress gadW. Negatively regulates perA expression in acidic conditions and positively regulates it in alkaline conditions. In Escherichia coli O127:H6 (strain E2348/69 / EPEC), this protein is HTH-type transcriptional regulator GadX (gadX).